The following is a 252-amino-acid chain: 5'-nucleotidase SurE (252 aa).

A divalent metal cation is bound by residues D8, D9, S39, and N91.

The protein belongs to the SurE nucleotidase family. A divalent metal cation serves as cofactor.

It is found in the cytoplasm. The enzyme catalyses a ribonucleoside 5'-phosphate + H2O = a ribonucleoside + phosphate. In terms of biological role, nucleotidase that shows phosphatase activity on nucleoside 5'-monophosphates. The chain is 5'-nucleotidase SurE from Paraburkholderia xenovorans (strain LB400).